We begin with the raw amino-acid sequence, 242 residues long: RNA transcription, translation and transport factor protein (242 aa).

Belongs to the RTRAF family. In terms of assembly, homodimer. Component of a tRNA-splicing ligase complex.

Its subcellular location is the nucleus. It localises to the cytoplasm. The protein resides in the cytosol. It is found in the perinuclear region. The protein localises to the cytoskeleton. Its subcellular location is the microtubule organizing center. It localises to the centrosome. Its function is as follows. RNA-binding protein involved in modulation of mRNA transcription by Polymerase II. Component of the tRNA-splicing ligase complex. This chain is RNA transcription, translation and transport factor protein, found in Danio rerio (Zebrafish).